The primary structure comprises 303 residues: CDAN1-interacting nuclease 1 (303 aa).

The protein resides in the nucleus. It is found in the cytoplasm. Functionally, may play a role in erythroid cell differentiation. The sequence is that of CDAN1-interacting nuclease 1 from Xenopus laevis (African clawed frog).